Here is a 394-residue protein sequence, read N- to C-terminus: 8-amino-7-oxononanoate synthase (394 aa).

Arginine 21 contacts substrate. 112 to 113 (GY) contributes to the pyridoxal 5'-phosphate binding site. Histidine 137 contacts substrate. Pyridoxal 5'-phosphate-binding residues include serine 183, histidine 211, and threonine 239. Lysine 242 bears the N6-(pyridoxal phosphate)lysine mark. Threonine 358 provides a ligand contact to substrate.

Belongs to the class-II pyridoxal-phosphate-dependent aminotransferase family. BioF subfamily. As to quaternary structure, homodimer. Pyridoxal 5'-phosphate serves as cofactor.

The catalysed reaction is 6-carboxyhexanoyl-[ACP] + L-alanine + H(+) = (8S)-8-amino-7-oxononanoate + holo-[ACP] + CO2. The protein operates within cofactor biosynthesis; biotin biosynthesis. Its function is as follows. Catalyzes the decarboxylative condensation of pimeloyl-[acyl-carrier protein] and L-alanine to produce 8-amino-7-oxononanoate (AON), [acyl-carrier protein], and carbon dioxide. This is 8-amino-7-oxononanoate synthase from Paraburkholderia xenovorans (strain LB400).